We begin with the raw amino-acid sequence, 74 residues long: Insertion element IS986 uncharacterized 8.2 kDa protein (74 aa).

The sequence is that of Insertion element IS986 uncharacterized 8.2 kDa protein from Mycobacterium tuberculosis.